The chain runs to 421 residues: Serine--tRNA ligase (421 aa).

229 to 231 is an L-serine binding site; the sequence is TSE. Residue 260 to 262 coordinates ATP; it reads RRE. L-serine is bound at residue E283. Position 347–350 (347–350) interacts with ATP; that stretch reads EISS. S381 serves as a coordination point for L-serine.

The protein belongs to the class-II aminoacyl-tRNA synthetase family. Type-1 seryl-tRNA synthetase subfamily. Homodimer. The tRNA molecule binds across the dimer.

The protein localises to the cytoplasm. It carries out the reaction tRNA(Ser) + L-serine + ATP = L-seryl-tRNA(Ser) + AMP + diphosphate + H(+). The catalysed reaction is tRNA(Sec) + L-serine + ATP = L-seryl-tRNA(Sec) + AMP + diphosphate + H(+). The protein operates within aminoacyl-tRNA biosynthesis; selenocysteinyl-tRNA(Sec) biosynthesis; L-seryl-tRNA(Sec) from L-serine and tRNA(Sec): step 1/1. In terms of biological role, catalyzes the attachment of serine to tRNA(Ser). Is also able to aminoacylate tRNA(Sec) with serine, to form the misacylated tRNA L-seryl-tRNA(Sec), which will be further converted into selenocysteinyl-tRNA(Sec). The sequence is that of Serine--tRNA ligase from Fusobacterium nucleatum subsp. nucleatum (strain ATCC 25586 / DSM 15643 / BCRC 10681 / CIP 101130 / JCM 8532 / KCTC 2640 / LMG 13131 / VPI 4355).